We begin with the raw amino-acid sequence, 1051 residues long: Kinesin-like protein KIN-UC (1051 aa).

Low complexity-rich tracts occupy residues 1–12 (MSSSNSSSAVRS), 28–39 (NSNHAVSLSSSS), and 64–90 (SASSSSSSSSVSASSPSTRRSGTPVRR). Disordered stretches follow at residues 1–39 (MSSSNSSSAVRSSAKHAAERIQQHLPPNSNHAVSLSSSS) and 51–109 (PGIA…RVSV). A Kinesin motor domain is found at 104–441 (RVRVSVRVRP…IMFGQRAMKI (338 aa)). Position 189–196 (189–196 (GQTGTGKT)) interacts with ATP. The D-BOX motif lies at 411–419 (RTSLIITIG). Coiled coils occupy residues 452 to 534 (DYES…QKDQ) and 568 to 761 (DTSQ…KRYM). Basic and acidic residues predominate over residues 753–766 (NVVEEKRYMKEDLS). Positions 753–788 (NVVEEKRYMKEDLSKGSAESGAQTGSQRSQGLKKSL) are disordered. A compositionally biased stretch (polar residues) spans 772 to 788 (SGAQTGSQRSQGLKKSL). ARM repeat units follow at residues 792 to 831 (RATMARLCEEVGIQKILQLIKSEDLEVQIQAVKVVANLAA), 833 to 873 (EANQ…NLAM), and 875 to 915 (EKSQ…NLCG). The stretch at 917–956 (EKFLKLLKEEEGIKGLLTMAQSGNIDIIAQVARGMANFAK) is one ARM 4; degenerate repeat.

It belongs to the TRAFAC class myosin-kinesin ATPase superfamily. Kinesin family. Ungrouped subfamily. In terms of assembly, interacts (via C-terminus) with NEK5. As to expression, expressed in young root hair-forming cells and in root hair-producing cells at the boundary between the hypocotyl and root. Expressed in cotyledons, young leaves, trichomes and flowers.

The protein resides in the cytoplasm. It localises to the cytoskeleton. Its subcellular location is the spindle. It is found in the phragmoplast. In terms of biological role, acts as a plus-end microtubule-dependent motor protein. Involved in the control of root hair tip growth by promoting microtubule depolymerization and limiting the accumulation of endoplasmic microtubules. In vitro, binds to polymerized actin through ARM repeats, and to polymerized tubulin through N-terminal motor domain. The protein is Kinesin-like protein KIN-UC of Arabidopsis thaliana (Mouse-ear cress).